We begin with the raw amino-acid sequence, 416 residues long: tRNA (guanine-N(7)-)-methyltransferase non-catalytic subunit wuho (416 aa).

Positions 47–88 are disordered; sequence TQSQESCPATATSTTAGKEPGGKEQQLAKQPEEGGTSASGSV. A compositionally biased stretch (polar residues) spans 49-62; the sequence is SQESCPATATSTTA. WD repeat units lie at residues 89 to 130, 177 to 216, 220 to 258, and 317 to 357; these read ATST…ARLL, GHLS…DIHS, GHRE…ELLQ, and AGSW…PTTN.

This sequence belongs to the WD repeat TRM82 family. As to quaternary structure, forms a heterodimer with the catalytic subunit Mettl1. Interacts with mei-P26 and weakly interacts with bgcn; required for the function or formation of the mei-P26-bgcn-bam-sxl complex. Interacts with nanos; may be involved in mei-P26-dependent derepression of the BMP signaling pathway. Interacts with Myc; the interaction may be mediated by mei-P26 and may be involved in the regulation of ribosome biogenesis. As to expression, in testis, it is present at high level in hub cells, a niche for germline stem cells of testis. Ubiquitously expressed in all testicular cells throughout spermatogenesis. Ubiquitously expressed in all germline and somatic cells of the ovary.

The protein resides in the nucleus. The protein localises to the cytoplasm. The protein operates within tRNA modification; N(7)-methylguanine-tRNA biosynthesis. Functionally, required for the Mettl1-dependent formation of N(7)-methylguanine at position 46 (m7G46) in tRNA. In the Mettl1-wuho methyltransferase complex, it is required to stabilize and induce conformational changes of the catalytic subunit. Required for binding of nanos mRNA and repression of translation by the mei-P26-bgcn-bam-sxl complex. May cooperate with mei-P26 and nanos to derepress the BMP signaling pathway. May cooperate with mei-P26 to suppress expression of a subset of microRNAs. May cooperate with mei-P26 to regulate bam expression levels in germline cells during gametogenesis. Required to promote mitosis to meiosis transition during gametogenesis. May regulate germline cell division in part by regulating ribosome biogenesis. This is tRNA (guanine-N(7)-)-methyltransferase non-catalytic subunit wuho from Drosophila erecta (Fruit fly).